The primary structure comprises 519 residues: MSLRFHTLPTLPRAVKPGCRELLCLLVIAVMVSPSASGMCPTACICATDIVSCTNKNLSKVPGNLFRLIKRLDLSYNRIGLLDADWIPVSFVKLSTLILRHNNITSISTGSFSTTPNLKCLDLSSNRLKSVKSATFQELKALEVLLLYNNHISYLDPAAFGGLSHLQKLYLSGNFLTQFPMDLYTGRFKLADLTFLDVSYNRIPSIPMHHINLVPGRQLRGIYLHGNPFVCDCSLYSLLIFWYRRHFSSVMDFKNDYTCRLWSDSRHSHQLQLLQESFLNCSYSVINGSFHALGFIHEAQVGERAIVHCDSKTGNGNTDFIWVGPDNRLLEPDKDMGNFRVFYNGSLVIENPGFEDAGVYSCIAMNRQRLLNETVDIMINVSNFTINRSHAHEAFNTAFTTLAACVASIVLVLLYLYLTPCPCKCKAKRQKNTLSQSSAHSSILSPGPTGDASADDRKAGKRVVFLEPLKDTAAGQNGKVKLFPSETVIAEGILKSTRAKSDSDSVNSVFSDTPFVAST.

The N-terminal stretch at 1–38 (MSLRFHTLPTLPRAVKPGCRELLCLLVIAVMVSPSASG) is a signal peptide. Residues 39–67 (MCPTACICATDIVSCTNKNLSKVPGNLFR) form the LRRNT domain. Residues 39–397 (MCPTACICAT…RSHAHEAFNT (359 aa)) lie on the Extracellular side of the membrane. 2 cysteine pairs are disulfide-bonded: cysteine 40/cysteine 46 and cysteine 44/cysteine 53. An N-linked (GlcNAc...) asparagine glycan is attached at asparagine 57. LRR repeat units lie at residues 68-89 (LIKR…WIPV), 93-114 (KLST…SFST), 117-138 (NLKC…TFQE), 141-162 (ALEV…AFGG), 165-186 (HLQK…LYTG), and 192-213 (DLTF…HINL). Residue asparagine 103 is glycosylated (N-linked (GlcNAc...) asparagine). One can recognise an LRRCT domain in the interval 227-283 (NPFVCDCSLYSLLIFWYRRHFSSVMDFKNDYTCRLWSDSRHSHQLQLLQESFLNCSY). 2 disulfides stabilise this stretch: cysteine 231–cysteine 259 and cysteine 233–cysteine 281. Asparagine 280, asparagine 287, asparagine 344, asparagine 372, asparagine 380, asparagine 383, and asparagine 387 each carry an N-linked (GlcNAc...) asparagine glycan. The Ig-like C2-type domain maps to 288–378 (GSFHALGFIH…RLLNETVDIM (91 aa)). Residues cysteine 309 and cysteine 362 are joined by a disulfide bond. The helical transmembrane segment at 398–418 (AFTTLAACVASIVLVLLYLYL) threads the bilayer. Topologically, residues 419–519 (TPCPCKCKAK…FSDTPFVAST (101 aa)) are cytoplasmic. Residues 498–519 (RAKSDSDSVNSVFSDTPFVAST) are disordered.

Belongs to the immunoglobulin superfamily. AMIGO family. In terms of assembly, binds itself as well as AMIGO1 and AMIGO3. Highest level in cerebellum, retina, liver, and lung. Lower levels in cerebrum, kidney, small intestine, spleen and testis.

It localises to the cell membrane. It is found in the nucleus. Functionally, required for depolarization-dependent survival of cultured cerebellar granule neurons. May mediate homophilic as well as heterophilic cell-cell interaction with AMIGO1 or AMIGO3. May contribute to signal transduction through its intracellular domain. In Mus musculus (Mouse), this protein is Amphoterin-induced protein 2.